A 391-amino-acid polypeptide reads, in one-letter code: MGESGPVVIDPRRHDAVLFGVGDALGSALASQLGQIGVGTAAIAADDPAAAADRLRVRPGRCVVVAGDPAAVEAARAAGFALVIGLAPDGRDGDGLRAAGADAVIAELEQITVRTGDRRMSQLPDASQALTGGADGLAGRHPAVFFDFDGTLSDIVDDPDAARPVAGATAALTRLAARCPVAVLSGRDLADVTKRVGVPGIWYAGSHGFELTAPDGSHHQNDDAAAAIPVLAQAAGRLSDELGTIPGVVVEHKRFGVAVHYRNAARDRVGEVAAAVRAAGRHDALRVTTGREVIELRPDLDWDKGKTLHWVIEHLRRSGSGALTPVYLGDDITDEDAFDAVRGGPVQGVPILVRHNDDGDRATAALFALDSPARAAEFTERLADQLERGEG.

Aspartate 147 acts as the Nucleophile in catalysis. The Mg(2+) site is built by aspartate 147, aspartate 149, and aspartate 330. 147–149 (DFD) is a substrate binding site.

It belongs to the trehalose phosphatase family. The cofactor is Mg(2+).

It carries out the reaction alpha,alpha-trehalose 6-phosphate + H2O = alpha,alpha-trehalose + phosphate. The protein operates within glycan biosynthesis; trehalose biosynthesis. Removes the phosphate from trehalose 6-phosphate to produce free trehalose. The sequence is that of Trehalose-phosphate phosphatase (otsB) from Mycobacterium avium (strain 104).